We begin with the raw amino-acid sequence, 528 residues long: Probable histone-arginine methyltransferase 1.4 (528 aa).

An N-acetylmethionine modification is found at Met-1. An SAM-dependent MTase PRMT-type domain is found at 144–459; it reads EAASAKMYFH…QSYTINLTLS (316 aa). Positions 161, 170, 194, 216, and 246 each coordinate S-adenosyl-L-methionine. Residues Glu-260 and Glu-269 contribute to the active site. Thr-274 lines the S-adenosyl-L-methionine pocket.

Belongs to the class I-like SAM-binding methyltransferase superfamily. Protein arginine N-methyltransferase family.

The protein localises to the nucleus. It localises to the cytoplasm. It carries out the reaction L-arginyl-[protein] + 2 S-adenosyl-L-methionine = N(omega),N(omega)-dimethyl-L-arginyl-[protein] + 2 S-adenosyl-L-homocysteine + 2 H(+). Its function is as follows. Methylates (mono- and asymmetric dimethylation) the guanidino nitrogens of arginyl residues in several proteins involved in DNA packaging, transcription regulation, and mRNA stability. Recruited to promoters upon gene activation, methylates histone H3 and activates transcription via chromatin remodeling. This is Probable histone-arginine methyltransferase 1.4 (PRMT14) from Arabidopsis thaliana (Mouse-ear cress).